The following is a 434-amino-acid chain: Glucose-6-phosphate 1-dehydrogenase (434 aa).

NADP(+) contacts are provided by residues 7 to 14 (GSSGDLAK), arginine 36, tyrosine 93, and lysine 112. D-glucose 6-phosphate contacts are provided by residues lysine 112, 137-141 (HYLLK), glutamate 175, and aspartate 193. Residue histidine 198 is the Proton acceptor of the active site. 2 residues coordinate D-glucose 6-phosphate: lysine 280 and lysine 285. Arginine 286 serves as a coordination point for NADP(+).

Belongs to the glucose-6-phosphate dehydrogenase family.

The enzyme catalyses D-glucose 6-phosphate + NADP(+) = 6-phospho-D-glucono-1,5-lactone + NADPH + H(+). It participates in carbohydrate degradation; pentose phosphate pathway; D-ribulose 5-phosphate from D-glucose 6-phosphate (oxidative stage): step 1/3. Catalyzes the rate-limiting step of the oxidative pentose-phosphate pathway, which represents a route for the dissimilation of carbohydrates besides glycolysis. The main function of this enzyme is to provide reducing power (NADPH) and pentose phosphates for fatty acid and nucleic acid synthesis. This chain is Glucose-6-phosphate 1-dehydrogenase (ZWF1), found in Encephalitozoon cuniculi (strain GB-M1) (Microsporidian parasite).